A 302-amino-acid chain; its full sequence is uncharacterized protein (302 aa).

The active site involves Glu48.

This sequence belongs to the PhzF family.

This is an uncharacterized protein from Clostridium acetobutylicum (strain ATCC 824 / DSM 792 / JCM 1419 / IAM 19013 / LMG 5710 / NBRC 13948 / NRRL B-527 / VKM B-1787 / 2291 / W).